Here is a 547-residue protein sequence, read N- to C-terminus: MARYVFITGGVVSSLGKGLASAALGALLQARGFSVRLRKLDPYLNVDPGTMSPFEHGEVFVTDDGAETDLDLGHYERFTGVSARKTDSVSSGRIYSNVLEKERRGDYLGKTIQVIPHVTNEIKDFLRVGEDEVDFMLCEIGGTVGDIEGLPFFEAIRQFAQDKPRGQCIFVHLTLLPYVSASGELKTKPTQHSVKELRSIGIAPDVLLLRSERAIPEKEREKIALFCNVRKEAVIAAYDLKTIYEAPLAYHREGLDQAVLDAFGISPAPKPNLDRWVDVMDRLENAEGEVRVAIVGKYTQLEDAYKSIAEALTHGGMANRTRVRAEWINAELFEREDPSPFLEGFHAILVPGGFGERGTEGKIRAAQYAREKGIPYLGICLGMQMAVIEAARNLAQVKDAGSEEFDHEVGKKRFTPVVYHLKEWIQGNHIVERKHDDDKGGTMRLGAYTAALTPGSRVSEIYHATEIEERHRHRYEVDVRYREALEGCGLTFSGMSPDGRLPEIVEIKDHPWFIGVQFHPELKSKPFAPHPLFADFVRAAVEVSRLV.

The interval 1–265 (MARYVFITGG…DQAVLDAFGI (265 aa)) is amidoligase domain. Serine 13 contacts CTP. Serine 13 contributes to the UTP binding site. Residues 14–19 (SLGKGL) and aspartate 71 each bind ATP. Mg(2+) is bound by residues aspartate 71 and glutamate 139. CTP is bound by residues 146 to 148 (DIE), 186 to 191 (KTKPTQ), and lysine 222. UTP-binding positions include 186–191 (KTKPTQ) and lysine 222. Positions 291-546 (RVAIVGKYTQ…VRAAVEVSRL (256 aa)) constitute a Glutamine amidotransferase type-1 domain. Glycine 353 contributes to the L-glutamine binding site. Cysteine 380 functions as the Nucleophile; for glutamine hydrolysis in the catalytic mechanism. L-glutamine-binding positions include 381–384 (LGMQ), glutamate 404, and arginine 474. Residues histidine 519 and glutamate 521 contribute to the active site.

The protein belongs to the CTP synthase family. As to quaternary structure, homotetramer.

The enzyme catalyses UTP + L-glutamine + ATP + H2O = CTP + L-glutamate + ADP + phosphate + 2 H(+). It carries out the reaction L-glutamine + H2O = L-glutamate + NH4(+). The catalysed reaction is UTP + NH4(+) + ATP = CTP + ADP + phosphate + 2 H(+). Its pathway is pyrimidine metabolism; CTP biosynthesis via de novo pathway; CTP from UDP: step 2/2. Its activity is regulated as follows. Allosterically activated by GTP, when glutamine is the substrate; GTP has no effect on the reaction when ammonia is the substrate. The allosteric effector GTP functions by stabilizing the protein conformation that binds the tetrahedral intermediate(s) formed during glutamine hydrolysis. Inhibited by the product CTP, via allosteric rather than competitive inhibition. Catalyzes the ATP-dependent amination of UTP to CTP with either L-glutamine or ammonia as the source of nitrogen. Regulates intracellular CTP levels through interactions with the four ribonucleotide triphosphates. The chain is CTP synthase from Cereibacter sphaeroides (strain ATCC 17029 / ATH 2.4.9) (Rhodobacter sphaeroides).